The chain runs to 244 residues: NAD(P)H-quinone oxidoreductase subunit K (244 aa).

[4Fe-4S] cluster contacts are provided by Cys60, Cys61, Cys125, and Cys156.

It belongs to the complex I 20 kDa subunit family. As to quaternary structure, NDH-1 can be composed of about 15 different subunits; different subcomplexes with different compositions have been identified which probably have different functions. Requires [4Fe-4S] cluster as cofactor.

It is found in the cellular thylakoid membrane. The enzyme catalyses a plastoquinone + NADH + (n+1) H(+)(in) = a plastoquinol + NAD(+) + n H(+)(out). It carries out the reaction a plastoquinone + NADPH + (n+1) H(+)(in) = a plastoquinol + NADP(+) + n H(+)(out). In terms of biological role, NDH-1 shuttles electrons from an unknown electron donor, via FMN and iron-sulfur (Fe-S) centers, to quinones in the respiratory and/or the photosynthetic chain. The immediate electron acceptor for the enzyme in this species is believed to be plastoquinone. Couples the redox reaction to proton translocation, and thus conserves the redox energy in a proton gradient. Cyanobacterial NDH-1 also plays a role in inorganic carbon-concentration. The chain is NAD(P)H-quinone oxidoreductase subunit K from Prochlorococcus marinus (strain AS9601).